The sequence spans 483 residues: Transmembrane protein 39B (483 aa).

Residue asparagine 9 is glycosylated (N-linked (GlcNAc...) asparagine). Helical transmembrane passes span 76–96 (HLLF…VHYI), 114–134 (TSLN…IVLA), 158–182 (LLVA…ILLF), 187–207 (FFNL…LQLG), 281–301 (EVLL…VWFV), 414–434 (VLNI…YSLL), and 440–460 (HHTI…FKLL).

The protein belongs to the TMEM39 family.

It localises to the endoplasmic reticulum membrane. Functionally, may protect the cells against DNA damage caused by exposure to the cold-warming stress and facilitates tissue damage repair during the recovery phase. In Xenopus tropicalis (Western clawed frog), this protein is Transmembrane protein 39B.